Reading from the N-terminus, the 304-residue chain is N-acetyl-D-glucosamine kinase (304 aa).

Residues 4 to 11 (GFDMGGTK) and 133 to 140 (GLGGGLVI) contribute to the ATP site. Residues His-157, Cys-177, Cys-179, and Cys-184 each contribute to the Zn(2+) site.

The protein belongs to the ROK (NagC/XylR) family. NagK subfamily.

It carries out the reaction N-acetyl-D-glucosamine + ATP = N-acetyl-D-glucosamine 6-phosphate + ADP + H(+). Its pathway is cell wall biogenesis; peptidoglycan recycling. Catalyzes the phosphorylation of N-acetyl-D-glucosamine (GlcNAc) derived from cell-wall degradation, yielding GlcNAc-6-P. The sequence is that of N-acetyl-D-glucosamine kinase from Pectobacterium carotovorum subsp. carotovorum (strain PC1).